A 752-amino-acid chain; its full sequence is ATP-dependent RNA helicase DRS1 (752 aa).

Disordered stretches follow at residues 1-61 (MVVG…NLDE) and 119-223 (GLVK…TEGD). A compositionally biased stretch (acidic residues) spans 19–34 (DSEDDVPILDSSDDEK). Residues 40–51 (TTKKRKGKNNKK) are compositionally biased toward basic residues. A compositionally biased stretch (basic and acidic residues) spans 124-142 (AHIDSKQEEETEKEKVEKE). 2 stretches are compositionally biased toward acidic residues: residues 167-191 (NQSEEEEEEEEKEEEEEEEEEQEEM) and 200-209 (DEIDEEDDSE). Serine 208 is subject to Phosphoserine. A Q motif motif is present at residues 231-259 (ENFNSLSLSRPVLKGLASLGYVKPSPIQS). Positions 262 to 437 (IPIALLGKDI…SLSLKKPVRI (176 aa)) constitute a Helicase ATP-binding domain. 275 to 282 (AVTGSGKT) serves as a coordination point for ATP. The short motif at 385–388 (DEAD) is the DEAD box element. The Helicase C-terminal domain occupies 448 to 639 (KLTQEFVRIR…SMNDTIEDIL (192 aa)). Positions 621 to 667 (IEETNKLVESMNDTIEDILVEEKEEKEILRAEMQLRKGENMLKHKKE) form a coiled coil. The disordered stretch occupies residues 673-752 (RRTWFQSESD…NKKKGFKSRR (80 aa)). Residues 694 to 705 (RNKKVTNSKKRK) are compositionally biased toward basic residues. Basic and acidic residues predominate over residues 722 to 734 (TKTDRIADQERTF). Basic residues predominate over residues 735 to 752 (KKQKSTNSNKKKGFKSRR).

The protein belongs to the DEAD box helicase family. DDX27/DRS1 subfamily. Interacts with RRP1 and associates with pre-ribosomal particles.

Its subcellular location is the nucleus. The protein resides in the nucleolus. It carries out the reaction ATP + H2O = ADP + phosphate + H(+). ATP-binding RNA helicase involved in ribosome assembly. This Saccharomyces cerevisiae (strain ATCC 204508 / S288c) (Baker's yeast) protein is ATP-dependent RNA helicase DRS1 (DRS1).